The following is a 310-amino-acid chain: MSEELSKKHTTRLNKLQKRLRREVGSAIADYNMIEDGDRVMCCLSGGKDSYAMLDILMNLQQRAPIQFEIIAVNLDQKQPGFPEDILPAYLDKLKVPYHILEKDTYSIVKDKIPEGKTTCSLCSRLRRGTLYGFAQRIGATKIALGHHRDDIIETLFLNMFFGGKMKAMPPKLLSDDGANIVIRPLAYCREKDLEEYAQLKQFPIIPCNLCGSQENLKRAAVKDMLNQWDRQYPGRIETIFTAMQNTAPSQGVDREQFDFISLKRDPDVPMTGDVAEADLPAFDFLDIANSGHIDLDAAQRIDVVSFYEA.

Residues Ser45–Ser50 carry the PP-loop motif motif. [4Fe-4S] cluster-binding residues include Cys120, Cys123, and Cys211.

The protein belongs to the TtcA family. Homodimer. It depends on Mg(2+) as a cofactor. Requires [4Fe-4S] cluster as cofactor.

The protein localises to the cytoplasm. The catalysed reaction is cytidine(32) in tRNA + S-sulfanyl-L-cysteinyl-[cysteine desulfurase] + AH2 + ATP = 2-thiocytidine(32) in tRNA + L-cysteinyl-[cysteine desulfurase] + A + AMP + diphosphate + H(+). Its pathway is tRNA modification. Catalyzes the ATP-dependent 2-thiolation of cytidine in position 32 of tRNA, to form 2-thiocytidine (s(2)C32). The sulfur atoms are provided by the cysteine/cysteine desulfurase (IscS) system. This is tRNA-cytidine(32) 2-sulfurtransferase from Shewanella putrefaciens (strain CN-32 / ATCC BAA-453).